Here is a 313-residue protein sequence, read N- to C-terminus: Protoheme IX farnesyltransferase (313 aa).

8 helical membrane passes run 23–43, 56–76, 107–127, 128–148, 155–175, 182–202, 243–263, and 291–311; these read ILAYIALTKPRVIELLLVTTI, PLLILNTLLGGVMAAASANTL, LIFGVVLGVGAFAWLWWTANL, LSGLLAVATIAFYVFVYTLVL, NVVWGGAAGCMPVMIGWSAVT, ALVMFAVIFFWTPPHTWALAM, LALAAGVIYAVVAFLAGVWFL, and YLAVVFCALAVDSVVGWPTLF.

It belongs to the UbiA prenyltransferase family. Protoheme IX farnesyltransferase subfamily.

It localises to the cell membrane. The catalysed reaction is heme b + (2E,6E)-farnesyl diphosphate + H2O = Fe(II)-heme o + diphosphate. It participates in porphyrin-containing compound metabolism; heme O biosynthesis; heme O from protoheme: step 1/1. In terms of biological role, converts heme B (protoheme IX) to heme O by substitution of the vinyl group on carbon 2 of heme B porphyrin ring with a hydroxyethyl farnesyl side group. This is Protoheme IX farnesyltransferase from Mycobacteroides abscessus (strain ATCC 19977 / DSM 44196 / CCUG 20993 / CIP 104536 / JCM 13569 / NCTC 13031 / TMC 1543 / L948) (Mycobacterium abscessus).